Reading from the N-terminus, the 198-residue chain is Protein GrpE (198 aa).

It belongs to the GrpE family. Homodimer.

The protein resides in the cytoplasm. Participates actively in the response to hyperosmotic and heat shock by preventing the aggregation of stress-denatured proteins, in association with DnaK and GrpE. It is the nucleotide exchange factor for DnaK and may function as a thermosensor. Unfolded proteins bind initially to DnaJ; upon interaction with the DnaJ-bound protein, DnaK hydrolyzes its bound ATP, resulting in the formation of a stable complex. GrpE releases ADP from DnaK; ATP binding to DnaK triggers the release of the substrate protein, thus completing the reaction cycle. Several rounds of ATP-dependent interactions between DnaJ, DnaK and GrpE are required for fully efficient folding. This chain is Protein GrpE, found in Baumannia cicadellinicola subsp. Homalodisca coagulata.